The sequence spans 129 residues: Serum amyloid A-4 protein (129 aa).

The first 18 residues, 1-18 (MKLLIGILFCTLIMGVTG), serve as a signal peptide directing secretion. The span at 107–121 (AEEWGRSGQDPDHFR) shows a compositional bias: basic and acidic residues. Residues 107 to 129 (AEEWGRSGQDPDHFRPAGLPKKY) are disordered.

It belongs to the SAA family. Apolipoprotein of the HDL complex.

The protein localises to the secreted. Functionally, major acute phase reactant. This is Serum amyloid A-4 protein from Bos taurus (Bovine).